A 431-amino-acid polypeptide reads, in one-letter code: C4-dicarboxylate transport protein (431 aa).

Transmembrane regions (helical) follow at residues 8–28 (ILYVQVLFAIFVGILLGHFWP), 44–64 (LIKMIIGPIIFCTVVTGIAGM), 78–98 (LLYFEIVSTFALLIGLGAAHL), 148–168 (GDILQILLVSLFFGAALAAIG), 188–208 (IVHVITKVAPIGAFGAMAFTI), 222–242 (LIGTFYFTAIVFVVFVLGAIA), 307–327 (IYMTMAVIFIAQATGIELTLL), and 355–375 (AATLAVVPTIPVAGMVLILGI).

This sequence belongs to the dicarboxylate/amino acid:cation symporter (DAACS) (TC 2.A.23) family.

It localises to the cell inner membrane. In terms of biological role, responsible for the transport of dicarboxylates such as succinate, fumarate, and malate from the periplasm across the membrane. The polypeptide is C4-dicarboxylate transport protein (Cupriavidus pinatubonensis (strain JMP 134 / LMG 1197) (Cupriavidus necator (strain JMP 134))).